Here is a 368-residue protein sequence, read N- to C-terminus: Aminomethyltransferase (368 aa).

It belongs to the GcvT family. The glycine cleavage system is composed of four proteins: P, T, L and H.

It carries out the reaction N(6)-[(R)-S(8)-aminomethyldihydrolipoyl]-L-lysyl-[protein] + (6S)-5,6,7,8-tetrahydrofolate = N(6)-[(R)-dihydrolipoyl]-L-lysyl-[protein] + (6R)-5,10-methylene-5,6,7,8-tetrahydrofolate + NH4(+). Functionally, the glycine cleavage system catalyzes the degradation of glycine. This is Aminomethyltransferase from Thermoanaerobacter pseudethanolicus (strain ATCC 33223 / 39E) (Clostridium thermohydrosulfuricum).